Here is an 808-residue protein sequence, read N- to C-terminus: Protein translocase subunit SecA 2 (808 aa).

ATP-binding positions include Q124, 142 to 146 (GEGKT), and D535.

This sequence belongs to the SecA family. As to quaternary structure, monomer and homodimer. Part of the essential Sec protein translocation apparatus which comprises SecA, SecYEG and auxiliary proteins SecDF. Other proteins may also be involved.

The protein localises to the cell membrane. It is found in the cytoplasm. The catalysed reaction is ATP + H2O + cellular proteinSide 1 = ADP + phosphate + cellular proteinSide 2.. Its function is as follows. Part of the Sec protein translocase complex. Interacts with the SecYEG preprotein conducting channel. Has a central role in coupling the hydrolysis of ATP to the transfer of proteins into and across the cell membrane, serving as an ATP-driven molecular motor driving the stepwise translocation of polypeptide chains across the membrane. The polypeptide is Protein translocase subunit SecA 2 (Mycobacterium bovis (strain BCG / Pasteur 1173P2)).